A 164-amino-acid polypeptide reads, in one-letter code: Succinate dehydrogenase assembly factor 2, mitochondrial (164 aa).

A mitochondrion-targeting transit peptide spans 1–27 (MAVVTLIPTLARVLSKHSLLSPLLSVT).

Belongs to the SDHAF2 family. As to quaternary structure, interacts with SDHA within the SDH catalytic dimer.

The protein resides in the mitochondrion matrix. Plays an essential role in the assembly of succinate dehydrogenase (SDH), an enzyme complex (also referred to as respiratory complex II) that is a component of both the tricarboxylic acid (TCA) cycle and the mitochondrial electron transport chain, and which couples the oxidation of succinate to fumarate with the reduction of ubiquinone (coenzyme Q) to ubiquinol. Required for flavinylation (covalent attachment of FAD) of the flavoprotein subunit SDHA of the SDH catalytic dimer. In Rattus norvegicus (Rat), this protein is Succinate dehydrogenase assembly factor 2, mitochondrial.